The following is a 228-amino-acid chain: L-ribulose-5-phosphate 4-epimerase UlaF (228 aa).

Residues 26–27 (GN), 43–44 (SG), and 72–73 (SS) each bind substrate. 3 residues coordinate Zn(2+): Asp-74, His-93, and His-95. Asp-118 functions as the Proton donor/acceptor in the catalytic mechanism. His-167 serves as a coordination point for Zn(2+). The active-site Proton donor/acceptor is Tyr-225.

It belongs to the aldolase class II family. AraD/FucA subfamily. Zn(2+) is required as a cofactor.

The enzyme catalyses L-ribulose 5-phosphate = D-xylulose 5-phosphate. It functions in the pathway cofactor degradation; L-ascorbate degradation; D-xylulose 5-phosphate from L-ascorbate: step 4/4. Functionally, catalyzes the isomerization of L-ribulose 5-phosphate to D-xylulose 5-phosphate. Is involved in the anaerobic L-ascorbate utilization. The protein is L-ribulose-5-phosphate 4-epimerase UlaF of Escherichia coli (strain SE11).